A 336-amino-acid polypeptide reads, in one-letter code: Aspartate--ammonia ligase (336 aa).

This sequence belongs to the class-II aminoacyl-tRNA synthetase family. AsnA subfamily.

It is found in the cytoplasm. The enzyme catalyses L-aspartate + NH4(+) + ATP = L-asparagine + AMP + diphosphate + H(+). It participates in amino-acid biosynthesis; L-asparagine biosynthesis; L-asparagine from L-aspartate (ammonia route): step 1/1. This is Aspartate--ammonia ligase from Ruminiclostridium cellulolyticum (strain ATCC 35319 / DSM 5812 / JCM 6584 / H10) (Clostridium cellulolyticum).